A 349-amino-acid chain; its full sequence is Quinone oxidoreductase-like protein 2 (349 aa).

K35 carries the N6-acetyllysine modification. Residue K200 is modified to N6-succinyllysine.

The protein belongs to the zinc-containing alcohol dehydrogenase family. Quinone oxidoreductase subfamily.

This Bos taurus (Bovine) protein is Quinone oxidoreductase-like protein 2.